The sequence spans 214 residues: 3,4-dihydroxy-2-butanone 4-phosphate synthase (214 aa).

D-ribulose 5-phosphate-binding positions include 37–38 (RE), aspartate 42, 150–154 (RRGHT), and glutamate 174. Residue glutamate 38 participates in Mg(2+) binding. Histidine 153 provides a ligand contact to Mg(2+).

It belongs to the DHBP synthase family. As to quaternary structure, homodimer. Requires Mg(2+) as cofactor. Mn(2+) is required as a cofactor.

The catalysed reaction is D-ribulose 5-phosphate = (2S)-2-hydroxy-3-oxobutyl phosphate + formate + H(+). It participates in cofactor biosynthesis; riboflavin biosynthesis; 2-hydroxy-3-oxobutyl phosphate from D-ribulose 5-phosphate: step 1/1. Its function is as follows. Catalyzes the conversion of D-ribulose 5-phosphate to formate and 3,4-dihydroxy-2-butanone 4-phosphate. The protein is 3,4-dihydroxy-2-butanone 4-phosphate synthase of Histophilus somni (strain 2336) (Haemophilus somnus).